Consider the following 247-residue polypeptide: Small ribosomal subunit protein uS2 (247 aa).

This sequence belongs to the universal ribosomal protein uS2 family.

The protein is Small ribosomal subunit protein uS2 of Halorhodospira halophila (strain DSM 244 / SL1) (Ectothiorhodospira halophila (strain DSM 244 / SL1)).